Consider the following 205-residue polypeptide: Recombination protein RecR (205 aa).

The C4-type zinc-finger motif lies at 64–79 (CSRCYFITQGDLCAIC). A Toprim domain is found at 87–182 (RVICVVEEPL…RVTRLARGLP (96 aa)).

The protein belongs to the RecR family.

In terms of biological role, may play a role in DNA repair. It seems to be involved in an RecBC-independent recombinational process of DNA repair. It may act with RecF and RecO. The chain is Recombination protein RecR from Roseiflexus sp. (strain RS-1).